The sequence spans 123 residues: Thioredoxin domain-containing protein 17 (123 aa).

Positions 41–123 (SWCPDCVTAE…DLVRMMFTED (83 aa)) constitute a Thioredoxin domain. Catalysis depends on nucleophile residues C43 and C46. C43 and C46 are oxidised to a cystine.

This sequence belongs to the thioredoxin family. As to expression, predominantly expressed in liver, brain and muscle. Also expressed in kidney, intestine, skin, stomach, gill and head kidney.

The protein localises to the cytoplasm. Its function is as follows. Disulfide reductase. May participate in various redox reactions through the reversible oxidation of its active center dithiol to a disulfide and catalyze dithiol-disulfide exchange reactions. Has peroxidase activity and may contribute to the elimination of cellular hydrogen peroxide. May function as an antioxidant involved in response to viral infection. The protein is Thioredoxin domain-containing protein 17 of Epinephelus coioides (Orange-spotted grouper).